A 390-amino-acid chain; its full sequence is Putative F-box protein At3g52320 (390 aa).

The region spanning 21–71 is the F-box domain; it reads VVFLPEIPEEMLIDILIRLPAKSLMRFKCVSKLWLSLITSRYFTNRFFKPS.

The protein is Putative F-box protein At3g52320 of Arabidopsis thaliana (Mouse-ear cress).